We begin with the raw amino-acid sequence, 235 residues long: UPF0714 protein YmaC (235 aa).

A helical membrane pass occupies residues 5–24; that stretch reads LLNVILVLAIVLFLRYVHYS.

The protein belongs to the UPF0714 family.

It localises to the cell membrane. This is UPF0714 protein YmaC (ymaC) from Bacillus subtilis (strain 168).